A 256-amino-acid chain; its full sequence is Imidazole glycerol phosphate synthase subunit HisF (256 aa).

Active-site residues include aspartate 12 and aspartate 131.

Belongs to the HisA/HisF family. Heterodimer of HisH and HisF.

Its subcellular location is the cytoplasm. The catalysed reaction is 5-[(5-phospho-1-deoxy-D-ribulos-1-ylimino)methylamino]-1-(5-phospho-beta-D-ribosyl)imidazole-4-carboxamide + L-glutamine = D-erythro-1-(imidazol-4-yl)glycerol 3-phosphate + 5-amino-1-(5-phospho-beta-D-ribosyl)imidazole-4-carboxamide + L-glutamate + H(+). It participates in amino-acid biosynthesis; L-histidine biosynthesis; L-histidine from 5-phospho-alpha-D-ribose 1-diphosphate: step 5/9. Its function is as follows. IGPS catalyzes the conversion of PRFAR and glutamine to IGP, AICAR and glutamate. The HisF subunit catalyzes the cyclization activity that produces IGP and AICAR from PRFAR using the ammonia provided by the HisH subunit. This Pseudomonas putida (strain ATCC 700007 / DSM 6899 / JCM 31910 / BCRC 17059 / LMG 24140 / F1) protein is Imidazole glycerol phosphate synthase subunit HisF.